The primary structure comprises 74 residues: UPF0435 protein BAA_0470 (74 aa).

Belongs to the UPF0435 family.

The sequence is that of UPF0435 protein BAA_0470 from Bacillus anthracis (strain A0248).